The sequence spans 266 residues: 3-methyl-2-oxobutanoate hydroxymethyltransferase (266 aa).

Mg(2+) contacts are provided by D46 and D85. Residues 46–47 (DS), D85, and K115 contribute to the 3-methyl-2-oxobutanoate site. E117 contributes to the Mg(2+) binding site. The active-site Proton acceptor is the E183.

Belongs to the PanB family. Homodecamer; pentamer of dimers. The cofactor is Mg(2+).

It is found in the cytoplasm. The catalysed reaction is 3-methyl-2-oxobutanoate + (6R)-5,10-methylene-5,6,7,8-tetrahydrofolate + H2O = 2-dehydropantoate + (6S)-5,6,7,8-tetrahydrofolate. It functions in the pathway cofactor biosynthesis; (R)-pantothenate biosynthesis; (R)-pantoate from 3-methyl-2-oxobutanoate: step 1/2. Its function is as follows. Catalyzes the reversible reaction in which hydroxymethyl group from 5,10-methylenetetrahydrofolate is transferred onto alpha-ketoisovalerate to form ketopantoate. The protein is 3-methyl-2-oxobutanoate hydroxymethyltransferase of Trichlorobacter lovleyi (strain ATCC BAA-1151 / DSM 17278 / SZ) (Geobacter lovleyi).